Reading from the N-terminus, the 117-residue chain is Large ribosomal subunit protein bL20 (117 aa).

The protein belongs to the bacterial ribosomal protein bL20 family.

Functionally, binds directly to 23S ribosomal RNA and is necessary for the in vitro assembly process of the 50S ribosomal subunit. It is not involved in the protein synthesizing functions of that subunit. In Geobacter metallireducens (strain ATCC 53774 / DSM 7210 / GS-15), this protein is Large ribosomal subunit protein bL20.